We begin with the raw amino-acid sequence, 279 residues long: DegV domain-containing protein SpyM3_1149 (279 aa).

The DegV domain maps to 4–278 (IKIVTDSSIT…EGAFAVMVRY (275 aa)). The hexadecanoate site is built by T62 and S95.

Its function is as follows. May bind long-chain fatty acids, such as palmitate, and may play a role in lipid transport or fatty acid metabolism. The polypeptide is DegV domain-containing protein SpyM3_1149 (Streptococcus pyogenes serotype M3 (strain ATCC BAA-595 / MGAS315)).